The primary structure comprises 228 residues: Aldehyde dehydrogenase 9 (228 aa).

An NAD(+)-binding site is contributed by 76–81 (GSTETA). Catalysis depends on residues E99 and C132.

The protein belongs to the aldehyde dehydrogenase family.

It catalyses the reaction an aldehyde + NAD(+) + H2O = a carboxylate + NADH + 2 H(+). The protein operates within alcohol metabolism; ethanol degradation; acetate from ethanol: step 2/2. This Polyandrocarpa misakiensis (Tunicate) protein is Aldehyde dehydrogenase 9 (ALDH9).